The following is a 488-amino-acid chain: Probable glycine dehydrogenase (decarboxylating) subunit 2 (488 aa).

Lys274 carries the post-translational modification N6-(pyridoxal phosphate)lysine.

It belongs to the GcvP family. C-terminal subunit subfamily. As to quaternary structure, the glycine cleavage system is composed of four proteins: P, T, L and H. In this organism, the P 'protein' is a heterodimer of two subunits. The cofactor is pyridoxal 5'-phosphate.

The catalysed reaction is N(6)-[(R)-lipoyl]-L-lysyl-[glycine-cleavage complex H protein] + glycine + H(+) = N(6)-[(R)-S(8)-aminomethyldihydrolipoyl]-L-lysyl-[glycine-cleavage complex H protein] + CO2. Functionally, the glycine cleavage system catalyzes the degradation of glycine. The P protein binds the alpha-amino group of glycine through its pyridoxal phosphate cofactor; CO(2) is released and the remaining methylamine moiety is then transferred to the lipoamide cofactor of the H protein. In Listeria monocytogenes serotype 4b (strain F2365), this protein is Probable glycine dehydrogenase (decarboxylating) subunit 2.